The primary structure comprises 877 residues: DNA polymerase I (877 aa).

Residues 177 to 270 form the 5'-3' exonuclease domain; the sequence is TPAQFIDLKA…LEDLVYSGPD (94 aa). The 164-residue stretch at 302–465 folds into the 3'-5' exonuclease domain; that stretch reads DFTIVDQISQ…TEPILLEKLS (164 aa).

This sequence belongs to the DNA polymerase type-A family. As to quaternary structure, single-chain monomer with multiple functions.

It catalyses the reaction DNA(n) + a 2'-deoxyribonucleoside 5'-triphosphate = DNA(n+1) + diphosphate. In addition to polymerase activity, this DNA polymerase exhibits 3'-5' and 5'-3' exonuclease activity. The protein is DNA polymerase I (polA) of Streptococcus pneumoniae serotype 4 (strain ATCC BAA-334 / TIGR4).